A 571-amino-acid chain; its full sequence is Glycine--tRNA ligase (571 aa).

2 residues coordinate substrate: Arg99 and Glu165. ATP-binding positions include 197 to 199 (RNE), 207 to 212 (IRLREF), 324 to 325 (EC), and 443 to 446 (GIDR). Position 212–216 (212–216 (FTQAE)) interacts with substrate. 439–443 (EPSFG) is a binding site for substrate.

This sequence belongs to the class-II aminoacyl-tRNA synthetase family.

The protein resides in the cytoplasm. It carries out the reaction tRNA(Gly) + glycine + ATP = glycyl-tRNA(Gly) + AMP + diphosphate. In terms of biological role, catalyzes the attachment of glycine to tRNA(Gly). The protein is Glycine--tRNA ligase of Pyrococcus abyssi (strain GE5 / Orsay).